The sequence spans 109 residues: Iron-sulfur cluster assembly protein CyaY (109 aa).

The protein belongs to the frataxin family.

In terms of biological role, involved in iron-sulfur (Fe-S) cluster assembly. May act as a regulator of Fe-S biogenesis. The chain is Iron-sulfur cluster assembly protein CyaY from Verminephrobacter eiseniae (strain EF01-2).